The primary structure comprises 266 residues: Glutamate racemase (266 aa).

Substrate is bound by residues 9–10 and 41–42; these read DS and YG. The Proton donor/acceptor role is filled by Cys-73. 74-75 contributes to the substrate binding site; that stretch reads NS. Residue Cys-183 is the Proton donor/acceptor of the active site. A substrate-binding site is contributed by 184-185; sequence TH.

It belongs to the aspartate/glutamate racemases family.

The enzyme catalyses L-glutamate = D-glutamate. It functions in the pathway cell wall biogenesis; peptidoglycan biosynthesis. In terms of biological role, provides the (R)-glutamate required for cell wall biosynthesis. This Shewanella loihica (strain ATCC BAA-1088 / PV-4) protein is Glutamate racemase.